The sequence spans 664 residues: Zinc finger protein 710 (664 aa).

Glycyl lysine isopeptide (Lys-Gly) (interchain with G-Cter in SUMO2) cross-links involve residues lysine 110 and lysine 113. A disordered region spans residues 121–141 (VYEVSVPGDDKDAGPAEAPAE). 3 C2H2-type zinc fingers span residues 295–317 (WQCR…ILGH), 323–345 (HSCP…LLTH), and 351–373 (HKCQ…MLLH). Lysine 377 participates in a covalent cross-link: Glycyl lysine isopeptide (Lys-Gly) (interchain with G-Cter in SUMO2). 8 C2H2-type zinc fingers span residues 379–401 (YSCH…EVKH), 407–429 (HVCV…LASH), 435–457 (YQCL…MLKH), 463–485 (FVCT…SLTH), 491–513 (FKCE…MLIH), 519–541 (YQCH…MIVH), 547–569 (FKCK…MHLH), and 575–598 (FKCP…KVKH).

It belongs to the krueppel C2H2-type zinc-finger protein family.

It localises to the nucleus. Functionally, may be involved in transcriptional regulation. This chain is Zinc finger protein 710 (ZNF710), found in Homo sapiens (Human).